A 241-amino-acid polypeptide reads, in one-letter code: MRNDGGFLLWWDGLRSEMQPIHDSQGVFAVLEKEVRRLGFDYYAYGVRHTIPFTRPKTEVHGTYPKAWLERYQMQNYGAVDPAILNGLRSSEMVVWSDSLFDQSRMLWNEARDWGLCVGATLPIRAPNNLLSVLSVARDQQNISSFEREEIRLRLRCMIELLTQKLTDLEHPMLMSNPVCLSHREREILQWTADGKSSGEIAIILSISESTVNFHHKNIQKKFDAPNKTLAAAYAAALGLI.

Residues 174–239 (LMSNPVCLSH…LAAAYAAALG (66 aa)) form the HTH luxR-type domain. A DNA-binding region (H-T-H motif) is located at residues 198–217 (SGEIAIILSISESTVNFHHK).

It belongs to the autoinducer-regulated transcriptional regulatory protein family. In terms of assembly, homodimer in the absence of any acyl-L-homoserine lactone. The presence of the autoinducer C4-HSL has no significant effect on dimerization whereas N-(3-oxododecanoyl)-L-homoserine lactone (3O-C12-HSL), the LasR inducer, is able to dissociate the RhlR homodimers into monomers.

It localises to the cytoplasm. Activated by interaction with the autoinducer signal molecule N-butanoyl-L-homoserine lactone (C4-HSL or BHL), the product of the RhlI synthase. Is also activated by binding to rosmarinic acid (RA), a homoserine lactone mimic produced by plants, which induces a broad quorum sensing response, including the induction of all major quorum sensing controlled virulence factors. Rosmarinic acid secretion may be a plant defense mechanism to stimulate a premature quorum sensing response. Functionally, quorum-sensing regulator that controls the expression of multiple virulence factors in response to extracellular signaling molecules called autoinducers. Involved, among others, in the transcriptional regulation of genes that are responsible for rhamnolipid surfactant biosynthesis. Acts by binding to a specific sequence in the rhlAB regulatory region, both in the presence and in the absence of its autoinducer. In the former case it activates transcription of the promoter, whereas in the latter it acts as a transcriptional repressor. Also regulates the expression of the rmlBDAC operon, encoding dTDP-L-rhamnose biosynthetic enzymes, by binding to the rml box in the promoter region. In addition, is involved in the regulation of the production of elastase (lasB) and pyocyanine. This is HTH-type quorum-sensing regulator RhlR from Pseudomonas aeruginosa (strain ATCC 15692 / DSM 22644 / CIP 104116 / JCM 14847 / LMG 12228 / 1C / PRS 101 / PAO1).